Consider the following 168-residue polypeptide: Peptidoglycan-associated lipoprotein (168 aa).

Positions 1–24 (MGRIAALTRNPVMIALVAMLAIAG) are cleaved as a signal peptide. The N-palmitoyl cysteine moiety is linked to residue cysteine 25. Cysteine 25 carries S-diacylglycerol cysteine lipidation. The OmpA-like domain occupies 50-167 (AQDFTVNIGD…RAVTTLSGAG (118 aa)).

Belongs to the Pal lipoprotein family. As to quaternary structure, the Tol-Pal system is composed of five core proteins: the inner membrane proteins TolA, TolQ and TolR, the periplasmic protein TolB and the outer membrane protein Pal. They form a network linking the inner and outer membranes and the peptidoglycan layer.

The protein resides in the cell outer membrane. Its function is as follows. Part of the Tol-Pal system, which plays a role in outer membrane invagination during cell division and is important for maintaining outer membrane integrity. The polypeptide is Peptidoglycan-associated lipoprotein (Mesorhizobium japonicum (strain LMG 29417 / CECT 9101 / MAFF 303099) (Mesorhizobium loti (strain MAFF 303099))).